Reading from the N-terminus, the 488-residue chain is Auxin transporter-like protein 1 (488 aa).

A disordered region spans residues 1-36 (MSGEKQAEESIVVSGEDEVAGRKVEDSAAEEDIDGN). At 1-64 (MSGEKQAEES…DAWFSCASNQ (64 aa)) the chain is on the cytoplasmic side. A helical transmembrane segment spans residues 65 to 82 (VAQVLLTLPYSFSQLGML). Topologically, residues 83-84 (SG) are extracellular. The chain crosses the membrane as a helical span at residues 85–105 (ILLQIFYGLMGSWTAYLISVL). Over 106–141 (YVEYRARMEKQEAKSFKNHVIQWFEVLDGLLGPYWK) the chain is Cytoplasmic. The helical transmembrane segment at 142 to 162 (AAGLAFNCTFLLFGSVIQLIA) threads the bilayer. At 163 to 178 (CASNIYYINDRLDKRT) the chain is on the extracellular side. Residues 179 to 199 (WTYIFGACCATTVFIPSFHNY) traverse the membrane as a helical segment. The Cytoplasmic portion of the chain corresponds to 200–202 (RIW). The chain crosses the membrane as a helical span at residues 203–223 (SFLGLGMTTYTAWYLTIASFL). Topologically, residues 224–238 (HGQAEGVTHSGPTKL) are extracellular. The chain crosses the membrane as a helical span at residues 239 to 259 (VLYFTGATNILYTFGGHAVTV). The Cytoplasmic portion of the chain corresponds to 260–273 (EIMHAMWKPRKFKS). Residues 274–294 (IYLMATLYVFTLTLPSASAVY) traverse the membrane as a helical segment. The Extracellular segment spans residues 295–320 (WAFGDQLLNHSNAFSLLPKTRFRDTA). Residue Asn303 is glycosylated (N-linked (GlcNAc...) asparagine). A helical membrane pass occupies residues 321 to 341 (VILMLIHQFITFGFACTPLYF). Over 342–362 (VWEKAIGMHHTKSLCLRALVR) the chain is Cytoplasmic. Residues 363–383 (LPVVVPIWFLAIIFPFFGPIN) form a helical membrane-spanning segment. Residue Ser384 is a topological domain, extracellular. Residues 385-405 (AVGALLVTFTVYIIPALAHML) form a helical membrane-spanning segment. Topologically, residues 406–427 (TYRTASARRNAAEKPPFFIPSW) are cytoplasmic. A helical transmembrane segment spans residues 428–448 (AGVYVINAFIVVWVLVLGFGF). Residues 449–488 (GGWASMTNFIRQIDTFGLFAKCYQCKPPPAPIAAGAHHRR) are Extracellular-facing.

The protein belongs to the amino acid/polyamine transporter 2 family. Amino acid/auxin permease (AAAP) (TC 2.A.18.1) subfamily.

The protein localises to the cell membrane. Its function is as follows. Carrier protein involved in proton-driven auxin influx. Mediates the formation of auxin gradient from developing leaves (site of auxin biosynthesis) to tips by contributing to the loading of auxin in vascular tissues and facilitating acropetal (base to tip) auxin transport within inner tissues of the root apex, and basipetal (tip to base) auxin transport within outer tissues of the root apex. The polypeptide is Auxin transporter-like protein 1 (LAX1) (Arabidopsis thaliana (Mouse-ear cress)).